We begin with the raw amino-acid sequence, 395 residues long: THP3 homolog C2A9.11c (395 aa).

Positions 91-127 are disordered; it reads LLSEEDEVDKKEKRRRRFENGSRSQNNAKSEELKVNP. The 167-residue stretch at 218–384 folds into the PCI domain; sequence DVGEYNQCQT…STDRFEKCMK (167 aa).

The protein belongs to the THP3 family.

The protein resides in the cytoplasm. Its subcellular location is the nucleus. In terms of biological role, required for transcription elongation. May also be involved in pre-mRNA splicing. The sequence is that of THP3 homolog C2A9.11c from Schizosaccharomyces pombe (strain 972 / ATCC 24843) (Fission yeast).